The chain runs to 713 residues: Denticleless protein homolog (713 aa).

WD repeat units lie at residues Gly-47 to Leu-89, Ala-96 to Glu-135, and Gly-138 to Phe-178. Positions Trp-168–Arg-171 match the DDB1-binding motif motif. The short motif at Pro-197–Lys-204 is the Nuclear localization signal element. 4 WD repeats span residues Asp-215–Arg-254, Thr-270–Val-309, Gly-314–Val-355, and Gly-359–Ala-399. Residues Trp-244 to Arg-247 carry the DDB1-binding motif motif. Disordered regions lie at residues Thr-474–Ala-544, Gly-604–Val-623, and Ser-635–Ser-700. 2 stretches are compositionally biased toward polar residues: residues Thr-504 to Pro-516 and Gly-612 to Val-623. Basic and acidic residues predominate over residues Ser-635–Ser-644. Polar residues predominate over residues Asn-686 to Gly-699.

The protein belongs to the WD repeat cdt2 family. As to quaternary structure, component of the DCX(DTL) E3 ubiquitin ligase complex, at least composed of cul4 (cul4a or cul4b), ddb1, dtl/cdt2 and rbx1.

Its subcellular location is the nucleus. The protein resides in the cytoplasm. It localises to the cytoskeleton. It is found in the microtubule organizing center. The protein localises to the centrosome. Its subcellular location is the chromosome. The protein operates within protein modification; protein ubiquitination. Functionally, substrate-specific adapter of a DCX (DDB1-CUL4-X-box) E3 ubiquitin-protein ligase complex required for cell cycle control, DNA damage response and translesion DNA synthesis. The DCX(DTL) complex, also named CRL4(CDT2) complex, mediates the polyubiquitination and subsequent degradation of CDT1, CDKN1A/p21(CIP1), KMT5A and SDE2. CDT1 degradation in response to DNA damage is necessary to ensure proper cell cycle regulation of DNA replication. CDKN1A/p21(CIP1) degradation during S phase or following UV irradiation is essential to control replication licensing. KMT5A degradation is also important for a proper regulation of mechanisms such as TGF-beta signaling, cell cycle progression, DNA repair and cell migration. Most substrates require their interaction with PCNA for their polyubiquitination: substrates interact with PCNA via their PIP-box, and those containing the 'K+4' motif in the PIP box, recruit the DCX(DTL) complex, leading to their degradation. In undamaged proliferating cells, the DCX(DTL) complex also promotes the 'Lys-164' monoubiquitination of PCNA, thereby being involved in PCNA-dependent translesion DNA synthesis. May play a role in the regulation of the circadian clock. The protein is Denticleless protein homolog (dtl) of Xenopus tropicalis (Western clawed frog).